The following is a 550-amino-acid chain: Chaperonin GroEL (550 aa).

ATP contacts are provided by residues Thr30–Pro33, Lys51, Asp87–Thr91, Gly415, Asn481–Ala483, and Asp497.

It belongs to the chaperonin (HSP60) family. As to quaternary structure, forms a cylinder of 14 subunits composed of two heptameric rings stacked back-to-back. Interacts with the co-chaperonin GroES.

The protein resides in the cytoplasm. It carries out the reaction ATP + H2O + a folded polypeptide = ADP + phosphate + an unfolded polypeptide.. In terms of biological role, together with its co-chaperonin GroES, plays an essential role in assisting protein folding. The GroEL-GroES system forms a nano-cage that allows encapsulation of the non-native substrate proteins and provides a physical environment optimized to promote and accelerate protein folding. In Photobacterium profundum (strain SS9), this protein is Chaperonin GroEL.